The chain runs to 380 residues: GDSL esterase/lipase At3g26430 (380 aa).

A signal peptide spans M1 to P25. Catalysis depends on S38, which acts as the Nucleophile. N97, N115, and N183 each carry an N-linked (GlcNAc...) asparagine glycan. Catalysis depends on residues D346 and H349.

It belongs to the 'GDSL' lipolytic enzyme family.

Its subcellular location is the secreted. It catalyses the reaction hexadecanoate ester + H2O = an aliphatic alcohol + hexadecanoate + H(+). It carries out the reaction a butanoate ester + H2O = an aliphatic alcohol + butanoate + H(+). Its activity is regulated as follows. Lipase activity is inhibited by phenylmethylsulfonyl fluoride (PMSF), but not neostigmine bromide (NB). In terms of biological role, lipase that can hydrolyze p-nitrophenyl butyrate and p-nitrophenyl palmitate in vitro. Possesses low activity against p-nitrophenyl acetate. Substrate preference is p-nitrophenyl palmitate &gt; p-nitrophenyl butyrate &gt;&gt; p-nitrophenyl acetate. Lacks cholinesterase activity. This is GDSL esterase/lipase At3g26430 from Arabidopsis thaliana (Mouse-ear cress).